A 405-amino-acid polypeptide reads, in one-letter code: Coenzyme F420 hydrogenase subunit alpha (405 aa).

Positions 63, 66, 380, and 383 each coordinate Ni(2+).

It belongs to the [NiFe]/[NiFeSe] hydrogenase large subunit family. As to quaternary structure, heterocomplex of the form (alpha(1)beta(1)gamma(1))(8). It depends on Ni(2+) as a cofactor. Requires iron-sulfur cluster as cofactor. FAD is required as a cofactor.

It carries out the reaction oxidized coenzyme F420-(gamma-L-Glu)(n) + H2 + H(+) = reduced coenzyme F420-(gamma-L-Glu)(n). In terms of biological role, reduces the physiological low-potential two-electron acceptor coenzyme F420, and the artificial one-electron acceptor methylviologen. In Methanothermobacter thermautotrophicus (strain ATCC 29096 / DSM 1053 / JCM 10044 / NBRC 100330 / Delta H) (Methanobacterium thermoautotrophicum), this protein is Coenzyme F420 hydrogenase subunit alpha (frhA).